An 84-amino-acid chain; its full sequence is Cytochrome b559 subunit alpha (84 aa).

The chain crosses the membrane as a helical span at residues 22–36 (IIHSITIPSLFVSGW). Histidine 24 is a heme binding site.

Belongs to the PsbE/PsbF family. In terms of assembly, heterodimer of an alpha subunit and a beta subunit. PSII is composed of 1 copy each of membrane proteins PsbA, PsbB, PsbC, PsbD, PsbE, PsbF, PsbH, PsbI, PsbJ, PsbK, PsbL, PsbM, PsbT, PsbX, PsbY, PsbZ, Psb30/Ycf12, at least 3 peripheral proteins of the oxygen-evolving complex and a large number of cofactors. It forms dimeric complexes. Heme b is required as a cofactor.

The protein localises to the plastid. The protein resides in the chloroplast thylakoid membrane. Its function is as follows. This b-type cytochrome is tightly associated with the reaction center of photosystem II (PSII). PSII is a light-driven water:plastoquinone oxidoreductase that uses light energy to abstract electrons from H(2)O, generating O(2) and a proton gradient subsequently used for ATP formation. It consists of a core antenna complex that captures photons, and an electron transfer chain that converts photonic excitation into a charge separation. This Phaeodactylum tricornutum (strain CCAP 1055/1) protein is Cytochrome b559 subunit alpha.